A 146-amino-acid polypeptide reads, in one-letter code: D-aminoacyl-tRNA deacylase (146 aa).

The Gly-cisPro motif, important for rejection of L-amino acids motif lies at 137–138 (GP).

It belongs to the DTD family. Homodimer.

It is found in the cytoplasm. It catalyses the reaction glycyl-tRNA(Ala) + H2O = tRNA(Ala) + glycine + H(+). The catalysed reaction is a D-aminoacyl-tRNA + H2O = a tRNA + a D-alpha-amino acid + H(+). Functionally, an aminoacyl-tRNA editing enzyme that deacylates mischarged D-aminoacyl-tRNAs. Also deacylates mischarged glycyl-tRNA(Ala), protecting cells against glycine mischarging by AlaRS. Acts via tRNA-based rather than protein-based catalysis; rejects L-amino acids rather than detecting D-amino acids in the active site. By recycling D-aminoacyl-tRNA to D-amino acids and free tRNA molecules, this enzyme counteracts the toxicity associated with the formation of D-aminoacyl-tRNA entities in vivo and helps enforce protein L-homochirality. The sequence is that of D-aminoacyl-tRNA deacylase from Desulfatibacillum aliphaticivorans.